Reading from the N-terminus, the 341-residue chain is S-adenosylmethionine:tRNA ribosyltransferase-isomerase (341 aa).

Belongs to the QueA family. In terms of assembly, monomer.

Its subcellular location is the cytoplasm. It carries out the reaction 7-aminomethyl-7-carbaguanosine(34) in tRNA + S-adenosyl-L-methionine = epoxyqueuosine(34) in tRNA + adenine + L-methionine + 2 H(+). It participates in tRNA modification; tRNA-queuosine biosynthesis. Its function is as follows. Transfers and isomerizes the ribose moiety from AdoMet to the 7-aminomethyl group of 7-deazaguanine (preQ1-tRNA) to give epoxyqueuosine (oQ-tRNA). The chain is S-adenosylmethionine:tRNA ribosyltransferase-isomerase from Pelotomaculum thermopropionicum (strain DSM 13744 / JCM 10971 / SI).